A 354-amino-acid polypeptide reads, in one-letter code: Inactive ADP-ribosyltransferase ARH2 (354 aa).

Phosphoserine is present on Ser27.

Belongs to the ADP-ribosylglycohydrolase family.

The protein resides in the cytoplasm. It localises to the myofibril. Its subcellular location is the sarcomere. In terms of biological role, required for myofibril assembly and outgrowth of the cardiac chambers in the developing heart. Appears to be catalytically inactive, showing no activity against O-acetyl-ADP-ribose. The protein is Inactive ADP-ribosyltransferase ARH2 (ADPRHL1) of Homo sapiens (Human).